The sequence spans 284 residues: 2-dehydro-3-deoxyphosphooctonate aldolase (284 aa).

The protein belongs to the KdsA family.

The protein localises to the cytoplasm. It catalyses the reaction D-arabinose 5-phosphate + phosphoenolpyruvate + H2O = 3-deoxy-alpha-D-manno-2-octulosonate-8-phosphate + phosphate. Its pathway is carbohydrate biosynthesis; 3-deoxy-D-manno-octulosonate biosynthesis; 3-deoxy-D-manno-octulosonate from D-ribulose 5-phosphate: step 2/3. It functions in the pathway bacterial outer membrane biogenesis; lipopolysaccharide biosynthesis. The protein is 2-dehydro-3-deoxyphosphooctonate aldolase of Proteus mirabilis (strain HI4320).